We begin with the raw amino-acid sequence, 612 residues long: Phosphomethylpyrimidine synthase (612 aa).

2 disordered regions span residues 1 to 33 (MTIK…TEAG) and 105 to 146 (AGRP…RDGN). Residues 12 to 24 (TQNTAQADTAENT) show a composition bias toward low complexity. Residues 105–117 (AGRPVRPEDDGIK) show a composition bias toward basic and acidic residues. Substrate contacts are provided by residues N213, M242, Y271, H307, 327–329 (SRG), 368–371 (DGLR), and E407. H411 contributes to the Zn(2+) binding site. Y434 is a substrate binding site. H475 lines the Zn(2+) pocket. 3 residues coordinate [4Fe-4S] cluster: C555, C558, and C563.

Belongs to the ThiC family. The cofactor is [4Fe-4S] cluster.

It catalyses the reaction 5-amino-1-(5-phospho-beta-D-ribosyl)imidazole + S-adenosyl-L-methionine = 4-amino-2-methyl-5-(phosphooxymethyl)pyrimidine + CO + 5'-deoxyadenosine + formate + L-methionine + 3 H(+). Its pathway is cofactor biosynthesis; thiamine diphosphate biosynthesis. Its function is as follows. Catalyzes the synthesis of the hydroxymethylpyrimidine phosphate (HMP-P) moiety of thiamine from aminoimidazole ribotide (AIR) in a radical S-adenosyl-L-methionine (SAM)-dependent reaction. This is Phosphomethylpyrimidine synthase from Streptomyces coelicolor (strain ATCC BAA-471 / A3(2) / M145).